We begin with the raw amino-acid sequence, 216 residues long: Ras-related protein Rab-11A (216 aa).

Position 2 is an N-acetylglycine (G2). GTP is bound by residues S20, G21, V22, G23, K24, S25, N26, N37, L38, S40, S42, and T43. A Mg(2+)-binding site is contributed by S25. The Switch 1 motif lies at 36–47 (FNLESKSTIGVE). Positions 43 and 66 each coordinate Mg(2+). The short motif at 67 to 86 (TAGQERYRAITSAYYRGAVG) is the Switch 2 element. Residues G69, N124, K125, D127, A155, and L156 each coordinate GTP. A disordered region spans residues 183-211 (DRRENDMSPSNNVVPIHVPPTTENKPKVQ). S-geranylgeranyl cysteine attachment occurs at residues C212 and C213. C213 is modified (cysteine methyl ester). The propeptide at 214 to 216 (QNI) is removed in mature form.

This sequence belongs to the small GTPase superfamily. Rab family. As to quaternary structure, interacts (GTP-bound form) with RAB11FIPs (via their C-termini) including RAB11FIP1, RAB11FIP2, RAB11FIP3, RAB11FIP4 and RAB11FIP5 effectors. Forms a complex with RAB11FIP3 and dynein intermediate chain DYNC1LI1; the interaction between RAB11A1 and RAB11FIP3 is direct; the complex regulates endocytic trafficking. Interacts with EVI5; EVI5 and RAB11FIP3 may be mutually exclusive and compete for binding RAB11A. Interacts with SGSM1, SGSM2, SGSM3 and VIPAS39. Interacts with EXOC6 in a GTP-dependent manner. Interacts with RAB11FIP5. Interacts with STXBP6. Interacts (GDP-bound form) with ZFYVE27. Interacts with BIRC6/bruce. May interact with TBC1D14. Interacts with UNC119; in a cell cycle-dependent manner. GDP-bound and nucleotide-free forms interact with SH3BP5. Interacts (GDP-bound form) with KIF5A in a ZFYVE27-dependent manner. Interacts (GDP-bound form) with RELCH. Found in a complex composed of RELCH, OSBP1 and RAB11A. Interacts with TBC1D12. Interacts with DEF6. Interacts with ATP9A. Forms a heterotetramer with RAB11FIP3; the GTP-bound form is preferred for binding. Forms a complex with Rabin8/RAB3IP and RAB11FIP3, probably a heterohexamer with two of each protein subunit, where Rabin8/RAB3IP and RAB11FIP3 simultaneously bind to RAB11A; the complex promotes preciliary trafficking and cilia growth. Forms a complex containing RAB11A, ASAP1, Rabin8/RAB3IP, RAP11FIP3 and ARF4; the complex promotes preciliary trafficking; the complex binds to RHO in photoreceptor cells and promotes RHO ciliary transport. Interacts (GTP-bound form) with WDR44; the interaction prevents RAB11A-RAB3IP-RAB11FIP3 complex formation. It depends on Mg(2+) as a cofactor. In terms of tissue distribution, detected in various tissues, such as brain, testis, spleen, and heart.

Its subcellular location is the cell membrane. The protein localises to the endosome membrane. The protein resides in the recycling endosome membrane. It localises to the cleavage furrow. It is found in the cytoplasmic vesicle. Its subcellular location is the phagosome. The protein localises to the cytoplasmic vesicle membrane. The protein resides in the golgi apparatus. It localises to the trans-Golgi network. It catalyses the reaction GTP + H2O = GDP + phosphate + H(+). Regulated by guanine nucleotide exchange factors (GEFs) which promote the exchange of bound GDP for free GTP. Regulated by GTPase activating proteins (GAPs) which increase the GTP hydrolysis activity. Inhibited by GDP dissociation inhibitors (GDIs) which prevent Rab-GDP dissociation. Its function is as follows. The small GTPases Rab are key regulators of intracellular membrane trafficking, from the formation of transport vesicles to their fusion with membranes. Rabs cycle between an inactive GDP-bound form and an active GTP-bound form that is able to recruit to membranes different set of downstream effectors directly responsible for vesicle formation, movement, tethering and fusion. The small Rab GTPase RAB11A regulates endocytic recycling. Forms a functional Rab11/RAB11FIP3/dynein complex that regulates the movement of peripheral sorting endosomes (SE) along microtubule tracks toward the microtubule organizing center/centrosome, generating the endosomal recycling compartment (ERC). Acts as a major regulator of membrane delivery during cytokinesis. Together with MYO5B and RAB8A participates in epithelial cell polarization. Together with Rabin8/RAB3IP, RAB8A, the exocyst complex, PARD3, PRKCI, ANXA2, CDC42 and DNMBP promotes transcytosis of PODXL to the apical membrane initiation sites (AMIS), apical surface formation and lumenogenesis. Together with MYO5B participates in CFTR trafficking to the plasma membrane and TF (Transferrin) recycling in nonpolarized cells. Required in a complex with MYO5B and RAB11FIP2 for the transport of NPC1L1 to the plasma membrane. Participates in the sorting and basolateral transport of CDH1 from the Golgi apparatus to the plasma membrane. Regulates the recycling of FCGRT (receptor of Fc region of monomeric IgG) to basolateral membranes. May also play a role in melanosome transport and release from melanocytes. Promotes Rabin8/RAB3IP preciliary vesicular trafficking to mother centriole by forming a ciliary targeting complex containing Rab11, ASAP1, Rabin8/RAB3IP, RAB11FIP3 and ARF4, thereby regulating ciliogenesis initiation. On the contrary, upon LPAR1 receptor signaling pathway activation, interaction with phosphorylated WDR44 prevents Rab11-RAB3IP-RAB11FIP3 complex formation and cilia growth. Participates in the export of a subset of neosynthesized proteins through a Rab8-Rab10-Rab11-endososomal dependent export route via interaction with WDR44. The polypeptide is Ras-related protein Rab-11A (Rattus norvegicus (Rat)).